Reading from the N-terminus, the 67-residue chain is Potassium channel toxin alpha-KTx 6.16 (67 aa).

Residues 1–24 (MNLKLALVLLLTVINVGMLPGATS) form the signal peptide. Disulfide bonds link C34–C55, C40–C60, C44–C62, and C50–C65.

Belongs to the short scorpion toxin superfamily. Potassium channel inhibitor family. Alpha-KTx 06 subfamily. In terms of tissue distribution, expressed by the venom gland.

It localises to the secreted. Inhibits voltage-gated potassium channels. This is Potassium channel toxin alpha-KTx 6.16 from Opisthacanthus cayaporum (South American scorpion).